A 325-amino-acid polypeptide reads, in one-letter code: Phospholipid phosphatase-related protein type 1 (325 aa).

N-linked (GlcNAc...) asparagine glycosylation is present at Asn5. The next 3 helical transmembrane spans lie at 13 to 33, 67 to 87, and 127 to 147; these read IIPC…LLAY, FITP…IIFI, and FTGV…AGQV. The N-linked (GlcNAc...) asparagine glycan is linked to Asn163. 3 helical membrane-spanning segments follow: residues 201–218, 230–247, and 257–277; these read AALS…ITST, VLCL…LNRV, and VIAG…CVVH. Position 307 is a phosphoserine (Ser307). Residue Asn316 is glycosylated (N-linked (GlcNAc...) asparagine).

Belongs to the PA-phosphatase related phosphoesterase family.

The protein resides in the cell membrane. It localises to the cell projection. Its subcellular location is the neuron projection. In terms of biological role, may play a role in neurite outgrowth and neurogenesis. The chain is Phospholipid phosphatase-related protein type 1 from Homo sapiens (Human).